The following is a 264-amino-acid chain: 3-methyl-2-oxobutanoate hydroxymethyltransferase (264 aa).

Aspartate 45 and aspartate 84 together coordinate Mg(2+). 3-methyl-2-oxobutanoate-binding positions include 45-46 (DS), aspartate 84, and lysine 112. Glutamate 114 is a binding site for Mg(2+). Glutamate 181 (proton acceptor) is an active-site residue.

The protein belongs to the PanB family. In terms of assembly, homodecamer; pentamer of dimers. It depends on Mg(2+) as a cofactor.

It localises to the cytoplasm. It catalyses the reaction 3-methyl-2-oxobutanoate + (6R)-5,10-methylene-5,6,7,8-tetrahydrofolate + H2O = 2-dehydropantoate + (6S)-5,6,7,8-tetrahydrofolate. It functions in the pathway cofactor biosynthesis; (R)-pantothenate biosynthesis; (R)-pantoate from 3-methyl-2-oxobutanoate: step 1/2. Its function is as follows. Catalyzes the reversible reaction in which hydroxymethyl group from 5,10-methylenetetrahydrofolate is transferred onto alpha-ketoisovalerate to form ketopantoate. The polypeptide is 3-methyl-2-oxobutanoate hydroxymethyltransferase (Shewanella sp. (strain MR-4)).